Consider the following 113-residue polypeptide: U11-theraphotoxin-Hhn1l (113 aa).

Positions 1–21 (MNTGRVTFLVVFLVAVSLGPA) are cleaved as a signal peptide. A propeptide spanning residues 22 to 74 (DKEENPMEMQEKTQQGKNYLNFGENLVVPKLEELKAKLVEKESKKSKNSRQKR) is cleaved from the precursor. Cystine bridges form between C82–C95 and C89–C110.

The protein belongs to the neurotoxin 14 (magi-1) family. 01 (HNTX-16) subfamily. In terms of tissue distribution, expressed by the venom gland.

It is found in the secreted. Its function is as follows. Probable ion channel inhibitor. This Cyriopagopus hainanus (Chinese bird spider) protein is U11-theraphotoxin-Hhn1l.